The chain runs to 295 residues: uncharacterized protein (295 aa).

A signal peptide spans methionine 1–alanine 26.

This is an uncharacterized protein from Archaeoglobus fulgidus (strain ATCC 49558 / DSM 4304 / JCM 9628 / NBRC 100126 / VC-16).